Consider the following 528-residue polypeptide: Biotin carboxylase 1, chloroplastic (528 aa).

Residues 1-51 (MEATLPVCKSVTSTPGLFMGKTSGIRSSQCSFMMGNKVNFPRQRAQTAHVH) constitute a chloroplast transit peptide. ATP contacts are provided by residues Lys179, Lys221, 227–228 (GG), 263–266 (EKYV), and His271. An ATP-grasp domain is found at 183–380 (RETMKKAGVP…LIEEQIRVAM (198 aa)). Residue Lys300 coordinates hydrogencarbonate. Residues Glu338 and Glu351 each coordinate ATP. Mg(2+)-binding residues include Glu338, Glu351, and Asn353. Residues Glu338, Glu351, and Asn353 each coordinate Mn(2+). Positions 355, 358, and 401 each coordinate hydrogencarbonate. Residue Arg355 is part of the active site. Residue Arg401 participates in biotin binding.

As to quaternary structure, acetyl-CoA carboxylase is a heterohexamer composed of biotin carboxyl carrier protein, biotin carboxylase and two subunits each of ACCase subunit alpha and ACCase plastid-coded subunit beta (accD). Mg(2+) serves as cofactor. The cofactor is Mn(2+).

It is found in the plastid. The protein resides in the chloroplast. The catalysed reaction is N(6)-biotinyl-L-lysyl-[protein] + hydrogencarbonate + ATP = N(6)-carboxybiotinyl-L-lysyl-[protein] + ADP + phosphate + H(+). It participates in lipid metabolism; malonyl-CoA biosynthesis; malonyl-CoA from acetyl-CoA: step 1/1. Functionally, this protein is a component of the acetyl coenzyme A carboxylase complex; first, biotin carboxylase catalyzes the carboxylation of the carrier protein and then the transcarboxylase transfers the carboxyl group to form malonyl-CoA. The chain is Biotin carboxylase 1, chloroplastic from Populus trichocarpa (Western balsam poplar).